A 159-amino-acid polypeptide reads, in one-letter code: Large ribosomal subunit protein uL30 (159 aa).

It belongs to the universal ribosomal protein uL30 family. As to quaternary structure, part of the 50S ribosomal subunit.

The chain is Large ribosomal subunit protein uL30 from Ignicoccus hospitalis (strain KIN4/I / DSM 18386 / JCM 14125).